The sequence spans 363 residues: tRNA/tmRNA (uracil-C(5))-methyltransferase (363 aa).

S-adenosyl-L-methionine is bound by residues Q187, Y215, N220, E236, and D296. C321 acts as the Nucleophile in catalysis. Residue E355 is the Proton acceptor of the active site.

The protein belongs to the class I-like SAM-binding methyltransferase superfamily. RNA M5U methyltransferase family. TrmA subfamily.

It catalyses the reaction uridine(54) in tRNA + S-adenosyl-L-methionine = 5-methyluridine(54) in tRNA + S-adenosyl-L-homocysteine + H(+). The catalysed reaction is uridine(341) in tmRNA + S-adenosyl-L-methionine = 5-methyluridine(341) in tmRNA + S-adenosyl-L-homocysteine + H(+). Functionally, dual-specificity methyltransferase that catalyzes the formation of 5-methyluridine at position 54 (m5U54) in all tRNAs, and that of position 341 (m5U341) in tmRNA (transfer-mRNA). This Pseudomonas fluorescens protein is tRNA/tmRNA (uracil-C(5))-methyltransferase.